The following is a 544-amino-acid chain: Potential vesicular glutamate transporter vglu-3 (544 aa).

The Cytoplasmic portion of the chain corresponds to M1–Q49. The helical transmembrane segment at I50–V70 threads the bilayer. Residues A71 to S104 lie on the Extracellular side of the membrane. N-linked (GlcNAc...) asparagine glycosylation is present at N78. A helical transmembrane segment spans residues F105 to P125. The Cytoplasmic segment spans residues N126–K127. The chain crosses the membrane as a helical span at residues I128–N148. Over F149–D154 the chain is Extracellular. Residues I155–M175 form a helical membrane-spanning segment. Over H176–T193 the chain is Cytoplasmic. The chain crosses the membrane as a helical span at residues T194 to V214. Residues S215–W219 are Extracellular-facing. The chain crosses the membrane as a helical span at residues S220–V240. Residues S241 to S285 are Cytoplasmic-facing. The chain crosses the membrane as a helical span at residues A286 to G306. Residues N307 to S323 lie on the Extracellular side of the membrane. Residues G324 to L344 form a helical membrane-spanning segment. The Cytoplasmic segment spans residues C345–R360. A helical transmembrane segment spans residues K361 to V381. The Extracellular portion of the chain corresponds to R382–P384. The helical transmembrane segment at V385–F405 threads the bilayer. Over N406–Y416 the chain is Cytoplasmic. The helical transmembrane segment at A417–V437 threads the bilayer. Residues T438 to K450 lie on the Extracellular side of the membrane. The chain crosses the membrane as a helical span at residues W451 to A471. At K472–S544 the chain is on the cytoplasmic side. A disordered region spans residues S501–S544. Residues N508–S544 show a composition bias toward basic and acidic residues.

This sequence belongs to the major facilitator superfamily. Sodium/anion cotransporter family. VGLUT subfamily.

The protein resides in the membrane. In Caenorhabditis elegans, this protein is Potential vesicular glutamate transporter vglu-3 (vglu-3).